The sequence spans 505 residues: Lysine--tRNA ligase (505 aa).

2 residues coordinate Mg(2+): glutamate 415 and glutamate 422.

This sequence belongs to the class-II aminoacyl-tRNA synthetase family. As to quaternary structure, homodimer. Mg(2+) is required as a cofactor.

It is found in the cytoplasm. It carries out the reaction tRNA(Lys) + L-lysine + ATP = L-lysyl-tRNA(Lys) + AMP + diphosphate. This is Lysine--tRNA ligase from Xanthomonas oryzae pv. oryzae (strain MAFF 311018).